Here is a 206-residue protein sequence, read N- to C-terminus: Phosphoserine phosphatase (206 aa).

The active-site Nucleophile is aspartate 7. 2 residues coordinate Mg(2+): aspartate 7 and aspartate 9. The Proton donor role is filled by aspartate 9. Residues glutamate 16, arginine 52, 95 to 96, and lysine 140 contribute to the substrate site; that span reads SG. Aspartate 163 contributes to the Mg(2+) binding site. Residue asparagine 166 participates in substrate binding.

This sequence belongs to the HAD-like hydrolase superfamily. SerB family. It depends on Mg(2+) as a cofactor.

It carries out the reaction O-phospho-L-serine + H2O = L-serine + phosphate. It catalyses the reaction O-phospho-D-serine + H2O = D-serine + phosphate. It participates in amino-acid biosynthesis; L-serine biosynthesis; L-serine from 3-phospho-D-glycerate: step 3/3. In Wolinella succinogenes (strain ATCC 29543 / DSM 1740 / CCUG 13145 / JCM 31913 / LMG 7466 / NCTC 11488 / FDC 602W) (Vibrio succinogenes), this protein is Phosphoserine phosphatase.